We begin with the raw amino-acid sequence, 81 residues long: Thrombin-like enzyme collinein-3 (81 aa).

Asp4 is an active-site residue. Cysteines 51 and 68 form a disulfide.

In terms of assembly, monomer. As to expression, expressed by the vanom gland.

It localises to the secreted. In terms of biological role, thrombin-like snake venom serine protease. The polypeptide is Thrombin-like enzyme collinein-3 (Crotalus durissus collilineatus (Brazilian rattlesnake)).